The following is a 365-amino-acid chain: Protein dbl-1 (365 aa).

Positions 1-42 (MNDSVRTTTTISSTKSLVHSFQLSAILHLFLLISFTPMSAAA) are cleaved as a signal peptide. Positions 43–244 (DQHASHATRR…KRSAQTGNSE (202 aa)) are excised as a propeptide. 3 N-linked (GlcNAc...) asparagine glycosylation sites follow: Asn110, Asn143, and Asn167. The interval 231–259 (SVRRKRSAQTGNSERKNRKKGRKHHNTEA) is disordered. Over residues 246–255 (KNRKKGRKHH) the composition is skewed to basic residues. 3 cysteine pairs are disulfide-bonded: Cys264–Cys330, Cys293–Cys362, and Cys297–Cys364. The N-linked (GlcNAc...) asparagine glycan is linked to Asn306.

It belongs to the TGF-beta family. Homodimer; disulfide-linked. Interacts with drag-1. As to expression, expressed in embryos just prior to hatching and remains constant in most cells throughout the larval and adult stages. Expressed by AVA command interneurons.

It is found in the secreted. Ligand for the serine/threonine-protein kinase receptor type-1 sma-6 which activates a TGF-beta-like signaling pathway. Multifunctional protein that is involved in body size, male ectodermal patterning, innate immunity, lipid metabolism and neural plasticity. Dose-dependent regulator of body size, probably influencing the sizes of some or all cells rather than their number. Plays a role in patterning of male-specific genital sensilla (simple sense organs), known as rays, and mating-associated structures, spicules. Plays a protective role in response to infection by the Gram-negative bacterium S.marcescens, by activating expression of genes involved in innate immunity. Regulator of lipid homeostasis, acting non cell-autonomously in the hypodermis; partly dependent on the Insulin/IGF-1-like signaling (IIS) mediated pathway. Required for aversive olfactory learning of pathogenic bacteria in adults. Involved in gland cell morphology, possibly via activation of a Smad-independent TGF-beta signaling pathway. Required to oppose the autoregulation of expression of Runt-related transcription factor rnt-1. The polypeptide is Protein dbl-1 (Caenorhabditis elegans).